Reading from the N-terminus, the 366-residue chain is ERCC4 domain-containing protein EP364R (366 aa).

The region spanning 3–101 (FLVADHREHH…QLYFFVEGPA (99 aa)) is the ERCC4 domain.

The protein belongs to the asfivirus EP364R family.

Its function is as follows. Plays a role in the inhibition of type I interferon signaling pathway. Mechanistically, specifically interacts with 2',3'-cGAMP and cleaves it via its phosphodiesterase activity. In turn, prevents 2',3'-cGAMP interaction with host ER-resident STING1 leading to inhibition of downstream signaling pathway and type I interferon production. The polypeptide is ERCC4 domain-containing protein EP364R (African swine fever virus (isolate Pig/Kenya/KEN-50/1950) (ASFV)).